The chain runs to 209 residues: Large ribosomal subunit protein uL3 (209 aa).

Q150 bears the N5-methylglutamine mark.

It belongs to the universal ribosomal protein uL3 family. As to quaternary structure, part of the 50S ribosomal subunit. Forms a cluster with proteins L14 and L19. Post-translationally, methylated by PrmB.

Its function is as follows. One of the primary rRNA binding proteins, it binds directly near the 3'-end of the 23S rRNA, where it nucleates assembly of the 50S subunit. The protein is Large ribosomal subunit protein uL3 of Salmonella paratyphi C (strain RKS4594).